The chain runs to 240 residues: uncharacterized protein (240 aa).

The signal sequence occupies residues 1 to 30 (MNKSGMSLIITMLLLIGTAIVIGAAYYAWS).

This is an uncharacterized protein from Methanocaldococcus jannaschii (strain ATCC 43067 / DSM 2661 / JAL-1 / JCM 10045 / NBRC 100440) (Methanococcus jannaschii).